A 254-amino-acid polypeptide reads, in one-letter code: Triosephosphate isomerase (254 aa).

Residue 9–11 (NWK) coordinates substrate. The active-site Electrophile is the histidine 95. Glutamate 167 functions as the Proton acceptor in the catalytic mechanism. Residues glycine 173, serine 213, and 234 to 235 (GG) each bind substrate.

This sequence belongs to the triosephosphate isomerase family. As to quaternary structure, homodimer.

It localises to the cytoplasm. It catalyses the reaction D-glyceraldehyde 3-phosphate = dihydroxyacetone phosphate. Its pathway is carbohydrate biosynthesis; gluconeogenesis. It functions in the pathway carbohydrate degradation; glycolysis; D-glyceraldehyde 3-phosphate from glycerone phosphate: step 1/1. Involved in the gluconeogenesis. Catalyzes stereospecifically the conversion of dihydroxyacetone phosphate (DHAP) to D-glyceraldehyde-3-phosphate (G3P). This is Triosephosphate isomerase from Roseiflexus sp. (strain RS-1).